The sequence spans 428 residues: 4-hydroxy-3-methylbut-2-en-1-yl diphosphate synthase (flavodoxin) (428 aa).

Residues Cys-300, Cys-303, Cys-346, and Glu-353 each contribute to the [4Fe-4S] cluster site.

It belongs to the IspG family. Requires [4Fe-4S] cluster as cofactor.

The catalysed reaction is (2E)-4-hydroxy-3-methylbut-2-enyl diphosphate + oxidized [flavodoxin] + H2O + 2 H(+) = 2-C-methyl-D-erythritol 2,4-cyclic diphosphate + reduced [flavodoxin]. It functions in the pathway isoprenoid biosynthesis; isopentenyl diphosphate biosynthesis via DXP pathway; isopentenyl diphosphate from 1-deoxy-D-xylulose 5-phosphate: step 5/6. Converts 2C-methyl-D-erythritol 2,4-cyclodiphosphate (ME-2,4cPP) into 1-hydroxy-2-methyl-2-(E)-butenyl 4-diphosphate. The protein is 4-hydroxy-3-methylbut-2-en-1-yl diphosphate synthase (flavodoxin) of Methylobacillus flagellatus (strain ATCC 51484 / DSM 6875 / VKM B-1610 / KT).